We begin with the raw amino-acid sequence, 202 residues long: Large ribosomal subunit protein bL25 (202 aa).

Positions 182 to 202 (QTAPEEEEGTAAETTEPELAE) are disordered. Acidic residues predominate over residues 185–202 (PEEEEGTAAETTEPELAE).

It belongs to the bacterial ribosomal protein bL25 family. CTC subfamily. Part of the 50S ribosomal subunit; part of the 5S rRNA/L5/L18/L25 subcomplex. Contacts the 5S rRNA. Binds to the 5S rRNA independently of L5 and L18.

Functionally, this is one of the proteins that binds to the 5S RNA in the ribosome where it forms part of the central protuberance. The chain is Large ribosomal subunit protein bL25 from Enterococcus faecalis (strain ATCC 700802 / V583).